A 252-amino-acid polypeptide reads, in one-letter code: Phosphate import ATP-binding protein PstB 1 (252 aa).

Residues 6–247 (LQIRDLSVYY…PKRKETEDYI (242 aa)) enclose the ABC transporter domain. 38–45 (GPSGSGKS) provides a ligand contact to ATP.

It belongs to the ABC transporter superfamily. Phosphate importer (TC 3.A.1.7) family. The complex is composed of two ATP-binding proteins (PstB), two transmembrane proteins (PstC and PstA) and a solute-binding protein (PstS).

It is found in the cell membrane. It carries out the reaction phosphate(out) + ATP + H2O = ADP + 2 phosphate(in) + H(+). Its function is as follows. Part of the ABC transporter complex PstSACB involved in phosphate import. Responsible for energy coupling to the transport system. This Streptococcus pyogenes serotype M1 protein is Phosphate import ATP-binding protein PstB 1.